The sequence spans 443 residues: Diels-Alderase poxQ (443 aa).

Positions 1 to 23 (MARIPLEFLSITLPVLLLAYCLA) are cleaved as a signal peptide. N-linked (GlcNAc...) asparagine glycans are attached at residues asparagine 78, asparagine 97, and asparagine 145.

It belongs to the Diels-Alderase family.

The protein operates within secondary metabolite biosynthesis. Diels-Alderase; part of the gene cluster that mediates the biosynthesis of oxaleimides, cytotoxic compounds containing an unusual disubstituted succinimide moiety. The first step of the pathway is provided by the HR-PKS poxF that serves in a new mode of collaborative biosynthesis with the PKS-NRPS poxE, by providing the olefin containing amino acid substrate via the synthesis of an ACP-bound dec-4-enoate. The cytochrome P450 monooxygenase poxM-catalyzed oxidation at the alpha-position creates the enzyme-bound 2-hydroxydec-4-enoyl-ACP thioester, which may be prone to spontaneous hydrolysis to yield 2-hydroxydec-4-enoic acid due to increased electrophilicity of the carbonyl. 2-hydroxydec-4-enoic acid can then be further oxidized by poxM to yield the alpha-ketoacid 2-oxodec-4-enoicacid, which is reductively aminated by the aminotransferase poxL to yield (S,E)-2-aminodec-4-enoic acid. The Hybrid PKS-NRPS synthetase poxE then performs condensation between the octaketide product of its PKS modules and the amino group of (S,E)-2-aminodec-4-enoic acid which is activated and incorporated by the adenylation domain. The resulting aminoacyl product can be cyclized by the Diels-Alderase PoxQ and reductively released by the reductive (R) domain of poxE to yield an aldehyde intermediate. The released aldehyde is then substrate for a Knoevenagel condensation by the hydrolyase poxO followed by an oxidation at the 5-position of the pyrrolidone ring. The presence of the olefin from the amino acid building block allows for migration of the substituted allyl group to occur. This allylic transposition reaction takes place in a conjugate addition, semipinacol-like fashion to yield a succinimide intermediate. Iterative two-electron oxidations of the C7 methyl of the succinimide intermediate to the carboxylic acid can be catalyzed by one of two remaining cytochrome P450 monooxygenasess poxC or poxD to yield oxaleimide A. Subsequent oxidation yields the maleimide scaffold oxaleimide I. Both oxaleimide A and oxaleimide I can undergo oxidative modifications in the decalin ring to yield the series of products oxaleimides B to H. In Penicillium oxalicum (strain 114-2 / CGMCC 5302) (Penicillium decumbens), this protein is Diels-Alderase poxQ.